A 233-amino-acid polypeptide reads, in one-letter code: MNSSVSTHGTGDCPVNCTKSEDFAPSKLGTKEYWDGAYKRELQTYKDIGDVGEIWFGEESMHRVIRWMEAQNISENAAILDIGTGNGMFLVELARHGFSNLTGIDYSKAALELTTNILVEEGLKNINIQVEDFLNPSTELKGFDVCIDKGTFDAISLNPEDREEAKKHYVTSLRAVMRPNGFFIITSCNWTKEQLLEIFKPGFELVRELPTPNFQFGGVTGNSVTALVFKQTD.

Belongs to the class I-like SAM-binding methyltransferase superfamily. EFM4 family.

It localises to the cytoplasm. It is found in the nucleus. It carries out the reaction L-lysyl-[protein] + 3 S-adenosyl-L-methionine = N(6),N(6),N(6)-trimethyl-L-lysyl-[protein] + 3 S-adenosyl-L-homocysteine + 3 H(+). Protein-lysine methyltransferase that selectively catalyzes the trimethylation of EEF1A at 'Lys-318'. This Danio rerio (Zebrafish) protein is EEF1A lysine methyltransferase 2.